The chain runs to 406 residues: MKTLNETTQQSTRAGRYGKDFGGQYIPETLMTELEKVTKAFNDLKDNPEFKAELNDLLVNYANRPSLLYYAKNMTEDLGGAKIYLKREDLNHTGAHKINNVIGQALLAKHLGKKRLIAETGAGQHGVATATIAALMGMDCEIFMGKEDTDRQKLNVYRMELLGAKVHPVTSGSMVLKDAVNATLQEWASRSDDTFYVLGSAVGPAPFPEMVKHFQSVISTESKQQLQAKEARLPDMVVACVGGGSNAIGSFAAYIDDPSVQLVGVEAAGKGVDTDRTAATIERGSVGIFHGMKSLFMQNEDGQIDPVYSISAGLDYPGVGPEHAALAQEGRAQYVGITDDEAVEAFTYIAKQEGIVAAIESCHAIAYVEKIAPQMAKDQIIICTLSGRGDKDVASIAKYKGVDVDE.

K97 is modified (N6-(pyridoxal phosphate)lysine).

This sequence belongs to the TrpB family. As to quaternary structure, tetramer of two alpha and two beta chains. Pyridoxal 5'-phosphate serves as cofactor.

It catalyses the reaction (1S,2R)-1-C-(indol-3-yl)glycerol 3-phosphate + L-serine = D-glyceraldehyde 3-phosphate + L-tryptophan + H2O. It participates in amino-acid biosynthesis; L-tryptophan biosynthesis; L-tryptophan from chorismate: step 5/5. Functionally, the beta subunit is responsible for the synthesis of L-tryptophan from indole and L-serine. The polypeptide is Tryptophan synthase beta chain (Lacticaseibacillus paracasei (strain ATCC 334 / BCRC 17002 / CCUG 31169 / CIP 107868 / KCTC 3260 / NRRL B-441) (Lactobacillus paracasei)).